The sequence spans 151 residues: Large-conductance mechanosensitive channel (151 aa).

3 helical membrane passes run 14-34 (VVDMAVGIIVGGAFGTIVNTL), 38-58 (VLMPPLGLLIGGVDFTNLYLI), and 86-106 (GLFLNSVISFLIMAFAVFLLV).

Belongs to the MscL family. In terms of assembly, homopentamer.

It localises to the cell inner membrane. Channel that opens in response to stretch forces in the membrane lipid bilayer. May participate in the regulation of osmotic pressure changes within the cell. The chain is Large-conductance mechanosensitive channel from Pelodictyon phaeoclathratiforme (strain DSM 5477 / BU-1).